Reading from the N-terminus, the 127-residue chain is Fluoride-specific ion channel FluC (127 aa).

A run of 4 helical transmembrane segments spans residues 7–27 (VYVA…VAWV), 38–58 (GTLA…VYVV), 70–90 (LIMV…LEAW), and 102–122 (LAYI…GIAL). Na(+) contacts are provided by Gly-77 and Thr-80.

The protein belongs to the fluoride channel Fluc/FEX (TC 1.A.43) family.

The protein localises to the cell inner membrane. The catalysed reaction is fluoride(in) = fluoride(out). Its activity is regulated as follows. Na(+) is not transported, but it plays an essential structural role and its presence is essential for fluoride channel function. Functionally, fluoride-specific ion channel. Important for reducing fluoride concentration in the cell, thus reducing its toxicity. This Hahella chejuensis (strain KCTC 2396) protein is Fluoride-specific ion channel FluC.